The following is a 403-amino-acid chain: Eukaryotic initiation factor 4A (403 aa).

The tract at residues 1–20 is disordered; it reads MDDRNEIPQDGPASMEPEGV. The short motif at 30 to 58 is the Q motif element; that stretch reads DNFDDMNLREELLRGIYGYGFEKPSAIQQ. The Helicase ATP-binding domain occupies 61–231; it reads IIPCVRGRDV…RCFMRDPVSI (171 aa). 74–81 provides a ligand contact to ATP; sequence AQSGTGKT. The DEAD box motif lies at 179–182; that stretch reads DEAD. Positions 242 to 403 constitute a Helicase C-terminal domain; sequence GIKQFYVNVK…EMPANIADLI (162 aa).

Belongs to the DEAD box helicase family. eIF4A subfamily. In terms of assembly, eIF4F is a multi-subunit complex, the composition of which varies with external and internal environmental conditions. It is composed of at least eIF4A, eIF4E1 and eIF4G1. Interacts with tud and vas. Interacts (via multiple contacts) with bam; the interaction is direct.

It localises to the cytoplasm. The protein resides in the cytoplasmic ribonucleoprotein granule. It carries out the reaction ATP + H2O = ADP + phosphate + H(+). Its function is as follows. ATP-dependent RNA helicase which is a subunit of the eIF4F complex involved in cap recognition and is required for mRNA binding to ribosome. In the current model of translation initiation, eIF4A unwinds RNA secondary structures in the 5'-UTR of mRNAs which is necessary to allow efficient binding of the small ribosomal subunit, and subsequent scanning for the initiator codon. As a result, promotes cell proliferation and growth. Binds and antagonises the bam-bgcn complex; probably prevents bam mediated translational repression of shg/E-cadherin. Involved in germ cell formation. Involved in germline stem cell maintenance and proliferation; prevents differentiation. This is Eukaryotic initiation factor 4A from Drosophila melanogaster (Fruit fly).